Here is a 258-residue protein sequence, read N- to C-terminus: MIMLNIGPFSFHSRLLLGTGKFPDFDVQQKAIDVSEAEILTFAVRRMDIFDAKQPNLLEKLDVKKYTLLPNTAGAKNAEEAVRIAKLAKASGLCDMIKVEVIGDDRTLLPDPVETLKASEMLLEEGFIVLPYTSDDVVLARKLQELGVHAIMPGASPIGSGLGIVNPLNLSFIIEQATVPVIVDAGIGSPADAAFAMELGADGVLLNTAVSGAKDPIKMAQAMKLSIEAGRLGFEAVRIARKRCATASSPLEGMSVVE.

K98 functions as the Schiff-base intermediate with DXP in the catalytic mechanism. 1-deoxy-D-xylulose 5-phosphate contacts are provided by residues G159, 185–186 (AG), and 207–208 (NT).

It belongs to the ThiG family. Homotetramer. Forms heterodimers with either ThiH or ThiS.

Its subcellular location is the cytoplasm. It carries out the reaction [ThiS sulfur-carrier protein]-C-terminal-Gly-aminoethanethioate + 2-iminoacetate + 1-deoxy-D-xylulose 5-phosphate = [ThiS sulfur-carrier protein]-C-terminal Gly-Gly + 2-[(2R,5Z)-2-carboxy-4-methylthiazol-5(2H)-ylidene]ethyl phosphate + 2 H2O + H(+). It participates in cofactor biosynthesis; thiamine diphosphate biosynthesis. Catalyzes the rearrangement of 1-deoxy-D-xylulose 5-phosphate (DXP) to produce the thiazole phosphate moiety of thiamine. Sulfur is provided by the thiocarboxylate moiety of the carrier protein ThiS. In vitro, sulfur can be provided by H(2)S. This Bacillus cereus (strain ATCC 14579 / DSM 31 / CCUG 7414 / JCM 2152 / NBRC 15305 / NCIMB 9373 / NCTC 2599 / NRRL B-3711) protein is Thiazole synthase.